The primary structure comprises 98 residues: A-type ATP synthase subunit F (98 aa).

Belongs to the V-ATPase F subunit family. As to quaternary structure, the A-type ATPase is composed of subunits A(3), B(3), C, D, E(1 or 2), F, H(2), I and K(x).

The protein localises to the cell membrane. Component of the A-type ATP synthase that produces ATP from ADP in the presence of a proton gradient across the membrane. The chain is A-type ATP synthase subunit F from Methanocaldococcus jannaschii (strain ATCC 43067 / DSM 2661 / JAL-1 / JCM 10045 / NBRC 100440) (Methanococcus jannaschii).